Here is a 465-residue protein sequence, read N- to C-terminus: Ribulose bisphosphate carboxylase large chain (465 aa).

The residue at position 4 (K4) is an N6,N6,N6-trimethyllysine. 2 residues coordinate substrate: N113 and T163. The Proton acceptor role is filled by K165. K167 contacts substrate. Residues K191, D193, and E194 each coordinate Mg(2+). An N6-carboxylysine modification is found at K191. The active-site Proton acceptor is the H284. The substrate site is built by R285, H317, and S369.

The protein belongs to the RuBisCO large chain family. Type I subfamily. In terms of assembly, heterohexadecamer of 8 large chains and 8 small chains; disulfide-linked. The disulfide link is formed within the large subunit homodimers. The cofactor is Mg(2+). The disulfide bond which can form in the large chain dimeric partners within the hexadecamer appears to be associated with oxidative stress and protein turnover.

The protein localises to the plastid. Its subcellular location is the chloroplast. The catalysed reaction is 2 (2R)-3-phosphoglycerate + 2 H(+) = D-ribulose 1,5-bisphosphate + CO2 + H2O. It carries out the reaction D-ribulose 1,5-bisphosphate + O2 = 2-phosphoglycolate + (2R)-3-phosphoglycerate + 2 H(+). Functionally, ruBisCO catalyzes two reactions: the carboxylation of D-ribulose 1,5-bisphosphate, the primary event in carbon dioxide fixation, as well as the oxidative fragmentation of the pentose substrate in the photorespiration process. Both reactions occur simultaneously and in competition at the same active site. This is Ribulose bisphosphate carboxylase large chain from Cornus canadensis (Bunchberry dogwood).